The following is a 291-amino-acid chain: Lys-63-specific deubiquitinase BRCC36 (291 aa).

Position 2 is an N-acetylalanine (A2). One can recognise an MPN domain in the interval 12 to 179 (VHLESDAFLV…YTCFQSIQAQ (168 aa)). Residues H122, H124, and D135 each coordinate Zn(2+). The short motif at 122–135 (HSHPHITVWPSHVD) is the JAMM motif element. S233 is modified (phosphoserine).

It belongs to the peptidase M67A family. BRCC36 subfamily. As to quaternary structure, component of the ARISC complex, at least composed of UIMC1/RAP80, ABRAXAS1, BRCC3/BRCC36, BABAM2 and BABAM1/NBA1. Component of the BRCA1-A complex, at least composed of BRCA1, BARD1, UIMC1/RAP80, ABRAXAS1, BRCC3/BRCC36, BABAM2 and BABAM1/NBA1. In the BRCA1-A complex, interacts directly with ABRAXAS1 and BABAM2. Component of the BRISC complex, at least composed of ABRAXAS2, BRCC3/BRCC36, BABAM2 and BABAM1/NBA1. Identified in a complex with SHMT2 and the other subunits of the BRISC complex. In the BRISC complex, interacts directly with ABRAXAS2. Identified in a complex with ABRAXAS2 and NUMA1. The BRISC complex interacts with the CSN complex. Component of the BRCA1/BRCA2 containing complex (BRCC), which also contains BRCA1, BRCA2, BARD1, BABAM2 and RAD51. BRCC is a ubiquitin E3 ligase complex that enhances cellular survival following DNA damage. Interacts with BRCA1. Binds polyubiquitin. Interacts with PWWP2B. Interacts with HDAC1; this interaction is enhanced in the presence of PWWP2B. Zn(2+) is required as a cofactor.

It is found in the nucleus. The protein resides in the cytoplasm. Its subcellular location is the cytoskeleton. It localises to the spindle pole. In terms of biological role, metalloprotease that specifically cleaves 'Lys-63'-linked polyubiquitin chains. Does not have activity toward 'Lys-48'-linked polyubiquitin chains. Component of the BRCA1-A complex, a complex that specifically recognizes 'Lys-63'-linked ubiquitinated histones H2A and H2AX at DNA lesions sites, leading to target the BRCA1-BARD1 heterodimer to sites of DNA damage at double-strand breaks (DSBs). In the BRCA1-A complex, it specifically removes 'Lys-63'-linked ubiquitin on histones H2A and H2AX, antagonizing the RNF8-dependent ubiquitination at double-strand breaks (DSBs). Catalytic subunit of the BRISC complex, a multiprotein complex that specifically cleaves 'Lys-63'-linked ubiquitin in various substrates. Mediates the specific 'Lys-63'-specific deubiquitination associated with the COP9 signalosome complex (CSN), via the interaction of the BRISC complex with the CSN complex. The BRISC complex is required for normal mitotic spindle assembly and microtubule attachment to kinetochores via its role in deubiquitinating NUMA1. Plays a role in interferon signaling via its role in the deubiquitination of the interferon receptor IFNAR1; deubiquitination increases IFNAR1 activity by enhancing its stability and cell surface expression. Acts as a regulator of the NLRP3 inflammasome by mediating deubiquitination of NLRP3, leading to NLRP3 inflammasome assembly. Down-regulates the response to bacterial lipopolysaccharide (LPS) via its role in IFNAR1 deubiquitination. Deubiquitinates HDAC1 and PWWP2B leading to their stabilization. This Mus musculus (Mouse) protein is Lys-63-specific deubiquitinase BRCC36 (Brcc3).